A 294-amino-acid chain; its full sequence is Lipoyl synthase (294 aa).

[4Fe-4S] cluster contacts are provided by cysteine 35, cysteine 40, cysteine 46, cysteine 61, cysteine 65, cysteine 68, and serine 273. The region spanning 47 to 262 (FRQRQATFLI…REQALSMGFE (216 aa)) is the Radical SAM core domain.

This sequence belongs to the radical SAM superfamily. Lipoyl synthase family. [4Fe-4S] cluster is required as a cofactor.

It is found in the cytoplasm. The enzyme catalyses [[Fe-S] cluster scaffold protein carrying a second [4Fe-4S](2+) cluster] + N(6)-octanoyl-L-lysyl-[protein] + 2 oxidized [2Fe-2S]-[ferredoxin] + 2 S-adenosyl-L-methionine + 4 H(+) = [[Fe-S] cluster scaffold protein] + N(6)-[(R)-dihydrolipoyl]-L-lysyl-[protein] + 4 Fe(3+) + 2 hydrogen sulfide + 2 5'-deoxyadenosine + 2 L-methionine + 2 reduced [2Fe-2S]-[ferredoxin]. The protein operates within protein modification; protein lipoylation via endogenous pathway; protein N(6)-(lipoyl)lysine from octanoyl-[acyl-carrier-protein]: step 2/2. Its function is as follows. Catalyzes the radical-mediated insertion of two sulfur atoms into the C-6 and C-8 positions of the octanoyl moiety bound to the lipoyl domains of lipoate-dependent enzymes, thereby converting the octanoylated domains into lipoylated derivatives. The chain is Lipoyl synthase from Geotalea daltonii (strain DSM 22248 / JCM 15807 / FRC-32) (Geobacter daltonii).